The primary structure comprises 349 residues: Ribonucleoside-diphosphate reductase small chain (349 aa).

Aspartate 99, glutamate 130, and histidine 133 together coordinate Fe cation. Residue tyrosine 137 is part of the active site. Residues glutamate 192, glutamate 226, and histidine 229 each contribute to the Fe cation site.

This sequence belongs to the ribonucleoside diphosphate reductase small chain family. As to quaternary structure, heterodimer of a large and a small subunit. It depends on Fe cation as a cofactor.

It catalyses the reaction a 2'-deoxyribonucleoside 5'-diphosphate + [thioredoxin]-disulfide + H2O = a ribonucleoside 5'-diphosphate + [thioredoxin]-dithiol. Functionally, provides the precursors necessary for DNA synthesis. Catalyzes the biosynthesis of deoxyribonucleotides from the corresponding ribonucleotides. The protein is Ribonucleoside-diphosphate reductase small chain (RNR2) of Plasmodium falciparum (isolate Dd2).